The chain runs to 465 residues: Argininosuccinate lyase (465 aa).

The protein belongs to the lyase 1 family. Argininosuccinate lyase subfamily.

Its subcellular location is the cytoplasm. The enzyme catalyses 2-(N(omega)-L-arginino)succinate = fumarate + L-arginine. It participates in amino-acid biosynthesis; L-arginine biosynthesis; L-arginine from L-ornithine and carbamoyl phosphate: step 3/3. The protein is Argininosuccinate lyase of Methylococcus capsulatus (strain ATCC 33009 / NCIMB 11132 / Bath).